A 614-amino-acid chain; its full sequence is Probable Xaa-Pro aminopeptidase P (614 aa).

Mn(2+) contacts are provided by aspartate 409, aspartate 420, glutamate 518, and glutamate 532.

This sequence belongs to the peptidase M24B family. Mn(2+) serves as cofactor.

The catalysed reaction is Release of any N-terminal amino acid, including proline, that is linked to proline, even from a dipeptide or tripeptide.. Catalyzes the removal of a penultimate prolyl residue from the N-termini of peptides. In Aspergillus niger (strain ATCC MYA-4892 / CBS 513.88 / FGSC A1513), this protein is Probable Xaa-Pro aminopeptidase P (ampp).